We begin with the raw amino-acid sequence, 561 residues long: Sesquiterpene synthase TPS2 (561 aa).

The interval 6–26 (ANGHSDVPSTQPPIGKQKKEI) is disordered. Residues arginine 277, aspartate 314, aspartate 318, arginine 455, and aspartate 458 each contribute to the (2E,6E)-farnesyl diphosphate site. Mg(2+) contacts are provided by aspartate 314 and aspartate 318. A DDXXD motif motif is present at residues 314–318 (DDTYD). 3 residues coordinate Mg(2+): aspartate 458, serine 462, and glutamate 466.

The protein belongs to the terpene synthase family. Tpsa subfamily. As to quaternary structure, monomer. It depends on Mg(2+) as a cofactor.

The protein resides in the cytoplasm. The enzyme catalyses (2E,6E)-farnesyl diphosphate = beta-ylangene + diphosphate. It carries out the reaction (2E,6E)-farnesyl diphosphate = beta-copaene + diphosphate. The catalysed reaction is (2E,6E)-farnesyl diphosphate = beta-cubebene + diphosphate. The protein operates within secondary metabolite biosynthesis; terpenoid biosynthesis. Sesquiterpene synthase involved in the biosynthesis of volatile organic compounds. Mediates the conversion of (2E,6E)-farnesyl diphosphate (FPP) into beta-ylangene, beta-copaene and beta-cubebene. Does not use (2E)-geranyl diphosphate (GPP) as substrate. The chain is Sesquiterpene synthase TPS2 from Cananga odorata (Ylang-ylang tree).